The chain runs to 270 residues: Regulatory protein RecX (270 aa).

This sequence belongs to the RecX family.

Its subcellular location is the cytoplasm. In terms of biological role, modulates RecA activity. The sequence is that of Regulatory protein RecX from Bacillus cereus (strain AH187).